A 327-amino-acid chain; its full sequence is MPVDQRPLAIAVMGPTASGKTALALEAAERWNGEIVSVDSALVYRGLEIGAAKPDAPMRAAVPHHLLDLRDPWQVYSAAEFATDARLAIAQIVARGKLPILAGGTGLYFRALLEGLSHLPEADQTVRASIAAEAQQIGWAGLHAQLARVDPVAAARIHATDPQRIQRALEVYRISGRPISAWQALPPGPRLPVRVLKVVLAPRERAVLHARIAHRLDAMLAQDFLGEVQRLRALPQMQAVAAPLDLPAVRAVGYRQAWQYLDGAGGLAEFRDKAIQATRQLAKRQLTWLRGELDARWFDPERDRHQLEDAIVGFLADRPAVRQASGV.

Residue 14–21 participates in ATP binding; that stretch reads GPTASGKT. 16-21 lines the substrate pocket; that stretch reads TASGKT. 2 interaction with substrate tRNA regions span residues 39–42 and 163–167; these read DSAL and QRIQR.

Belongs to the IPP transferase family. Monomer. Requires Mg(2+) as cofactor.

The enzyme catalyses adenosine(37) in tRNA + dimethylallyl diphosphate = N(6)-dimethylallyladenosine(37) in tRNA + diphosphate. Its function is as follows. Catalyzes the transfer of a dimethylallyl group onto the adenine at position 37 in tRNAs that read codons beginning with uridine, leading to the formation of N6-(dimethylallyl)adenosine (i(6)A). This chain is tRNA dimethylallyltransferase, found in Xanthomonas euvesicatoria pv. vesicatoria (strain 85-10) (Xanthomonas campestris pv. vesicatoria).